A 303-amino-acid chain; its full sequence is MASWAKGRSYLAPGLLQGQVAIVTGGATGIGKAIVKELLELGSNVVIASRKLERLKSAADELQANLPPTKQARVIPIQCNIRNEEEVNNLVKSTLDTFGKINFLVNNGGGQFLSPAEHISSKGWHAVLETNLTGTFYMCKAVYSSWMKEHGGSIVNIIVPTKAGFPLAVHSGAARAGVYNLTKSLALEWACSGIRINCVAPGVIYSQTAVENYGSWGQSFFEGSFQKIPAKRIGVPEEVSSVVCFLLSPAASFITGQSVDVDGGRSLYTHSYEVPDHDNWPKGAGDLSVVKKMKETFKEKAKL.

23–47 (VTGGATGIGKAIVKELLELGSNVVI) lines the NADP(+) pocket. Lys32 is subject to N6-succinyllysine. Position 49 is a phosphoserine (Ser49). Tyr179 functions as the Proton acceptor in the catalytic mechanism. The residue at position 179 (Tyr179) is a Phosphotyrosine. A Microbody targeting signal motif is present at residues 301–303 (AKL).

Belongs to the short-chain dehydrogenases/reductases (SDR) family. In terms of assembly, interacts with PEX5, probably required to target it into peroxisomes.

It is found in the peroxisome. The catalysed reaction is a (2E)-enoyl-CoA + NADPH + H(+) = a 2,3-saturated acyl-CoA + NADP(+). The enzyme catalyses (2E)-decenoyl-CoA + NADPH + H(+) = decanoyl-CoA + NADP(+). It carries out the reaction (2E)-hexenoyl-CoA + NADPH + H(+) = hexanoyl-CoA + NADP(+). It catalyses the reaction (2E)-octenoyl-CoA + NADPH + H(+) = octanoyl-CoA + NADP(+). The catalysed reaction is (2E)-dodecenoyl-CoA + NADPH + H(+) = dodecanoyl-CoA + NADP(+). The enzyme catalyses (2E)-tetradecenoyl-CoA + NADPH + H(+) = tetradecanoyl-CoA + NADP(+). The protein operates within lipid metabolism; fatty acid biosynthesis. Its function is as follows. Participates in chain elongation of fatty acids. Catalyzes the reduction of trans-2-enoyl-CoAs of varying chain lengths from 6:1 to 16:1, having maximum activity with 10:1 CoA. Has no 2,4-dienoyl-CoA reductase activity. This is Peroxisomal trans-2-enoyl-CoA reductase from Homo sapiens (Human).